The chain runs to 736 residues: Poly(A) polymerase gamma (736 aa).

Lys-2 carries the N6-acetyllysine modification. Phosphoserine occurs at positions 23 and 29. ATP-binding positions include 99–101, Thr-108, 112–114, Asp-166, Lys-227, Tyr-236, and 245–246; these read FGS, DID, and GV. Mg(2+) is bound by residues Asp-112, Asp-114, and Asp-166. The segment at 506-564 is disordered; that stretch reads KQSLSDVNRSSGGLQSKRLSLDSSCLDSSRDTDNGTPFNSPASKSDSPSVGETERNSAE. Over residues 509–519 the composition is skewed to polar residues; that stretch reads LSDVNRSSGGL. The segment covering 521-532 has biased composition (low complexity); the sequence is SKRLSLDSSCLD. Ser-525 carries the phosphoserine modification. Residues 539 to 555 are compositionally biased toward polar residues; that stretch reads NGTPFNSPASKSDSPSV. A phosphoserine mark is found at Ser-599 and Ser-648. Position 654 is a phosphothreonine (Thr-654). A compositionally biased stretch (basic and acidic residues) spans 673-685; the sequence is DPRTAEERKRKSV. The segment at 673-720 is disordered; the sequence is DPRTAEERKRKSVDAIGGESMPIPTIDTSRKKRLPSKELPDSSSPVPA. Ser-684 and Ser-708 each carry phosphoserine.

Belongs to the poly(A) polymerase family. Requires Mg(2+) as cofactor. Mn(2+) serves as cofactor. In terms of tissue distribution, expressed predominantly in testis, and weakly in other tissues. Overexpressed in several tumors.

It is found in the nucleus. It carries out the reaction RNA(n) + ATP = RNA(n)-3'-adenine ribonucleotide + diphosphate. Responsible for the post-transcriptional adenylation of the 3'-terminal of mRNA precursors and several small RNAs including signal recognition particle (SRP) RNA, nuclear 7SK RNA, U2 small nuclear RNA, and ribosomal 5S RNA. This Homo sapiens (Human) protein is Poly(A) polymerase gamma.